Reading from the N-terminus, the 251-residue chain is Probable transcriptional regulatory protein MMAR_2098 (251 aa).

It belongs to the TACO1 family.

The protein resides in the cytoplasm. In Mycobacterium marinum (strain ATCC BAA-535 / M), this protein is Probable transcriptional regulatory protein MMAR_2098.